Here is a 260-residue protein sequence, read N- to C-terminus: Proteasome subunit alpha (260 aa).

Positions 241 to 260 (VEAEEVPEKEEDYSELDSNY) are disordered. Positions 242–260 (EAEEVPEKEEDYSELDSNY) are enriched in acidic residues.

It belongs to the peptidase T1A family. In terms of assembly, the 20S proteasome core is composed of 14 alpha and 14 beta subunits that assemble into four stacked heptameric rings, resulting in a barrel-shaped structure. The two inner rings, each composed of seven catalytic beta subunits, are sandwiched by two outer rings, each composed of seven alpha subunits. The catalytic chamber with the active sites is on the inside of the barrel. Has a gated structure, the ends of the cylinder being occluded by the N-termini of the alpha-subunits. Is capped at one or both ends by the proteasome regulatory ATPase, PAN.

It is found in the cytoplasm. The formation of the proteasomal ATPase PAN-20S proteasome complex, via the docking of the C-termini of PAN into the intersubunit pockets in the alpha-rings, triggers opening of the gate for substrate entry. Interconversion between the open-gate and close-gate conformations leads to a dynamic regulation of the 20S proteasome proteolysis activity. Component of the proteasome core, a large protease complex with broad specificity involved in protein degradation. This chain is Proteasome subunit alpha, found in Thermococcus sibiricus (strain DSM 12597 / MM 739).